Here is a 361-residue protein sequence, read N- to C-terminus: Anthranilate phosphoribosyltransferase (361 aa).

5-phospho-alpha-D-ribose 1-diphosphate is bound by residues Gly101, 104–105, Thr109, 111–114, 129–137, and Ser141; these read GD, NIST, and KHGNRGVSS. An anthranilate-binding site is contributed by Gly101. Ser113 is a binding site for Mg(2+). Asn132 contacts anthranilate. Position 187 (Arg187) interacts with anthranilate. The Mg(2+) site is built by Asp245 and Glu246.

This sequence belongs to the anthranilate phosphoribosyltransferase family. Homodimer. It depends on Mg(2+) as a cofactor.

The enzyme catalyses N-(5-phospho-beta-D-ribosyl)anthranilate + diphosphate = 5-phospho-alpha-D-ribose 1-diphosphate + anthranilate. Its pathway is amino-acid biosynthesis; L-tryptophan biosynthesis; L-tryptophan from chorismate: step 2/5. Functionally, catalyzes the transfer of the phosphoribosyl group of 5-phosphorylribose-1-pyrophosphate (PRPP) to anthranilate to yield N-(5'-phosphoribosyl)-anthranilate (PRA). This Shewanella denitrificans (strain OS217 / ATCC BAA-1090 / DSM 15013) protein is Anthranilate phosphoribosyltransferase.